The primary structure comprises 1966 residues: MWIPTEHEKYGVVIASFRGTVPYGLSLEIGDTVQILEKCDGWYRGFALKNPNIKGIFPSSYVHLKNACVKNKGQFEMVIPTEDSVITEMTSTLRDWGTMWKQLYVRNEGDLFHRLWHIMNEILDLRRQVLVGHLTHDRMKDVKRHITARLDWGNEQLGLDLVPRKEYAMVDPEDISITELYRLMEHRHRKKDTPVQASSHHLFVQMKSLMCSNLGEELEVIFSLFDSKENRPISERFFLRLNRNGLPKAPDKPERHCSLFVDLGSSELRKDIYITVHIIRIGRMGAGEKKNACSVQYRRPFGCAVLSIADLLTGETKDDLILKVYMCNTESEWYQIHENIIKKLNARYNLTGSNAGLAVSLQLLHGDIEQIRREYSSVFSHGVSITRKLGFSNIIMPGEMRNDLYITIERGEFEKGGKSVARNVEVTMFIVDSSGQTLKDFISFGSGEPPASEYHSFVLYHNNSPRWSELLKLPIPVDKFRGAHIRFEFRHCSTKEKGEKKLFGFSFVPLMQEDGRTLPDGTHELIVHKCEENTNLQDTTRYLKLPFSKGIFLGNNNQAMKATKESFCITSFLCSTKLTQNGDMLDLLKWRTHPDKITGCLSKLKEIDGSEIVKFLQDTLDTLFGILDENSQKYGSKVFDSLVHIINLLQDSKFHHFKPVMDTYIESHFAGALAYRDLIKVLKWYVDRITEAERQEHIQEVLKAQEYIFKYIVQSRRLFSLATGGQNEEEFRCCIQELLMSVRFFLSQESKGSGALSQSQAVFLSSFPAVYSELLKLFDVREVANLVQDTLGSLPTILHVDDSLQAIKLQCIGKTVESQLYTNPDSRYILLPVVLHHLHIHLQEQKDLIMCARILSNVFCLIKKNSSEKSVLEEIDVIVASLLDILLRTILEITSRPQPSSSAMRFQFQDVTGEFVACLLSLLRQMTDRHYQQLLDSFNTKEELRDFLLQIFTVFRILIRPEMFPKDWTVMRLVANNVIITTVLYLSDALRKNFLNENFDYKIWDSYFYLAVIFINQLCLQLEMFTPSKKKKVLEKYGDMRVTMGCEIFSMWQNLGEHKLHFIPALIGPFLEVTLIPQPDLRNVMIPIFHDMMDWEQRRSGNFKQVEAKLIDKLDSLMSEGKGDETYRELFNSILLKKIERETWRESGVSLIATVTRLMERLLDYRDCMKMGEVDGKKIGCTVSLLNFYKTELNKEEMYIRYIHKLYDLHLKAQNFTEAAYTLLLYDELLEWSDRPLREFLTYPMQTEWQRKEHLHLTIIQNFDRGKCWENGIILCRKIAEQYESYYDYRNLSKMRMMEASLYDKIMDQQRLEPEFFRVGFYGKKFPFFLRNKEFVCRGHDYERLEAFQQRMLNEFPHAIAMQHANQPDETIFQAEAQYLQIYAVTPIPESQEVLQREGVPDNIKSFYKVNHIWKFRYDRPFHKGTKDKENEFKSLWVERTSLYLVQSLPGISRWFEVEKREVVEMSPLENAIEVLENKNQQLKTLISQCQTRQMQNINPLTMCLNGVIDAAVNGGVSRYQEAFFVKEYILSHPEDGEKIARLRELMLEQAQILEFGLAVHEKFVPQDMRPLHKKLVDQFFVMKSSLGIQEFSACMQASPVHFPNGSPRVCRNSAPASVSPDGTRVIPRRSPLSYPAVNRYSSSSLSSQASAEVSNITGQSESSDEVFNMQPSPSTSSLSSTHSASPNVTSSAPSSARASPLLSDKHKHSRENSCLSPRERPCSAIYPTPVEPSQRMLFNHIGDGALPRSDPNLSAPEKAVNPTPSSWSLDSGKEAKNMSDSGKLISPPVPPRPTQTASPARHTTSVSPSPAGRSPLKGSVQSFTPSPVEYHSPGLISNSPVLSGSYSSGISSLSRCSTSETSGFENQVNEQSAPLPVPVPVPVPSYGGEEPVRKESKTPPPYSVYERTLRRPVPLPHSLSIPVTSEPPALPPKPLAARSSHLENGARRTDPGPRPRPLPRKVSQL.

Residues 6 to 67 (EHEKYGVVIA…PSSYVHLKNA (62 aa)) form the SH3 domain. Phosphotyrosine is present on Tyr-167. A Phosphothreonine modification is found at Thr-193. The C2 DOCK-type domain maps to 401–574 (RNDLYITIER…ESFCITSFLC (174 aa)). Positions 1190–1596 (KTELNKEEMY…LGIQEFSACM (407 aa)) constitute a DOCKER domain. A phosphoserine mark is found at Ser-1599, Ser-1607, Ser-1614, Ser-1618, Ser-1620, and Ser-1631. 2 disordered regions span residues 1648-1729 (SQAS…IYPT) and 1742-1966 (IGDG…VSQL). The segment covering 1672–1703 (PSPSTSSLSSTHSASPNVTSSAPSSARASPLL) has biased composition (low complexity). A Phosphoserine modification is found at Ser-1769. The short motif at 1788–1794 (PPVPPRP) is the SH3-binding element. Polar residues predominate over residues 1795–1809 (TQTASPARHTTSVSP). The span at 1838-1863 (SNSPVLSGSYSSGISSLSRCSTSETS) shows a compositional bias: low complexity. The segment covering 1864 to 1873 (GFENQVNEQS) has biased composition (polar residues). The span at 1941–1954 (SHLENGARRTDPGP) shows a compositional bias: basic and acidic residues.

It belongs to the DOCK family. As to quaternary structure, interacts with nucleotide-free Rap1; functions as a guanine nucleotide exchange factor (GEF) for Rap1. Interacts (via DOCKER domain) with RAC1; functions as a guanine nucleotide exchange factor (GEF) for RAC1. Interacts with the SH3 domain of CRK. Interacts with FASLG. Interacts with ELMO2 and EPHA2; mediates activation of RAC1 by EPHA2. Interacts with USH1C (via PDZ 1 domain). Widely expressed at low level. Highly expressed in skeletal muscle, prostate and ovary. As to expression, may be specifically expressed in the brain and eye.

Its subcellular location is the cell membrane. It is found in the cell projection. It localises to the cytoplasm. The protein localises to the cytosol. Functionally, functions as a guanine nucleotide exchange factor (GEF) that promotes the exchange of GDP to GTP, converting inactive GDP-bound small GTPases into their active GTP-bound form. Involved in regulation of adherens junction between cells. Plays a role in cell migration. In terms of biological role, has a higher guanine nucleotide exchange factor activity compared to other isoforms. This is Dedicator of cytokinesis protein 4 (DOCK4) from Homo sapiens (Human).